Here is a 922-residue protein sequence, read N- to C-terminus: GPI inositol-deacylase (922 aa).

Over 1–11 the chain is Cytoplasmic; the sequence is MFLHSVNLWNL. The helical transmembrane segment at 12 to 32 threads the bilayer; that stretch reads AFYVFMVFLATLGLWDVFFGF. Topologically, residues 33-597 are lumenal; it reads EENKCSMSYM…GQVVRFHGGA (565 aa). The active site involves Ser174. 3 N-linked (GlcNAc...) asparagine glycosylation sites follow: Asn363, Asn402, and Asn558. Residues 598–618 traverse the membrane as a helical segment; sequence LPAYVVSSILLAYGGQLYSLL. The Cytoplasmic portion of the chain corresponds to 619–641; that stretch reads STGFCLEYGTMLDKEAKPYKVDP. A helical membrane pass occupies residues 642–662; sequence FVIMIKFLLGYKWFKELWDAV. Over 663–668 the chain is Lumenal; it reads LLPELD. The helical transmembrane segment at 669-689 threads the bilayer; it reads AIVLTSQSMCFPLVSLILFLF. Residues 690–694 lie on the Cytoplasmic side of the membrane; sequence GTCTA. Residues 695–715 traverse the membrane as a helical segment; it reads YWSGLLSSASVQLLSSLWLAL. Residues 716 to 733 are Lumenal-facing; sequence KRPAELPKDVKVMSPDLP. The helical transmembrane segment at 734–754 threads the bilayer; that stretch reads VLTVVFLIISWTTCGALAILL. Residues 755–816 are Cytoplasmic-facing; the sequence is SYLYYVFKVV…NDAEDSLRMH (62 aa). The disordered stretch occupies residues 776–801; that stretch reads NQPVNPKHSRRSEKKSNHHKDSAIQN. Positions 782–793 are enriched in basic residues; it reads KHSRRSEKKSNH. Residues 817–837 traverse the membrane as a helical segment; that stretch reads STVINLLTWVVLLSMPSLIYW. Over 838–853 the chain is Lumenal; the sequence is SKNLRYYFKLNPDPCK. The helical transmembrane segment at 854 to 874 threads the bilayer; sequence PLAFLLIPAIAVLGNTHTVSI. At 875–894 the chain is on the cytoplasmic side; sequence KSSKLLKTASQFPLPLAVGV. A helical transmembrane segment spans residues 895–915; it reads IAFGSSHLYRVPCFVIIPLVF. The Lumenal portion of the chain corresponds to 916–922; sequence HSLCNFM.

The protein belongs to the GPI inositol-deacylase family.

It localises to the endoplasmic reticulum membrane. Functionally, GPI inositol-deacylase that catalyzes the remove of the acyl chain linked to the 2-OH position of inositol ring from the GPI-anchored protein (GPI-AP) in the endoplasmic reticulum. Initiates the post-attachment remodeling phase of GPI-AP biogenesis and participates in endoplasmic reticulum (ER)-to-Golgi transport of GPI-anchored protein. In Rattus norvegicus (Rat), this protein is GPI inositol-deacylase.